We begin with the raw amino-acid sequence, 700 residues long: Elongation factor G (700 aa).

Positions 8 to 290 (ERYRNIGISA…AVVEFMPSPV (283 aa)) constitute a tr-type G domain. GTP contacts are provided by residues 17-24 (AHIDAGKT), 88-92 (DTPGH), and 142-145 (NKMD).

The protein belongs to the TRAFAC class translation factor GTPase superfamily. Classic translation factor GTPase family. EF-G/EF-2 subfamily.

The protein resides in the cytoplasm. Its function is as follows. Catalyzes the GTP-dependent ribosomal translocation step during translation elongation. During this step, the ribosome changes from the pre-translocational (PRE) to the post-translocational (POST) state as the newly formed A-site-bound peptidyl-tRNA and P-site-bound deacylated tRNA move to the P and E sites, respectively. Catalyzes the coordinated movement of the two tRNA molecules, the mRNA and conformational changes in the ribosome. The polypeptide is Elongation factor G (Albidiferax ferrireducens (strain ATCC BAA-621 / DSM 15236 / T118) (Rhodoferax ferrireducens)).